Consider the following 200-residue polypeptide: Snake venom serine protease VaSP1 (200 aa).

The Peptidase S1 domain occupies 1–200 (VIGGDECNIN…EIQGIVSYGK (200 aa)). Catalysis depends on charge relay system residues aspartate 88 and serine 182.

In terms of assembly, monomer. In terms of processing, N-glycosylated. The protein exist in multiple isoforms. Expressed by the venom gland.

It localises to the secreted. Its activity is regulated as follows. Inhibited by Pefabloc (90% inhibition), DTT (90%), Zn(2+) (80%), trypsin inhibitor II (50%), and benzamidine (45%), but not inhibited by EDTA, Ca(2+), Mg(2+) and L-Cys. In terms of biological role, snake venom serine protease active on several blood coagulation enzymes. It completely cleaves fibrinogen Aalpha chain (FGA) after 120 minutes, partially cleaves Bbeta chain (FGB) (overnight) and has no activity on gamma chain. It does not release fibrinopeptides A and/or B exclusively, since the enzyme does not provoke fibrin polymerisation. It also degrades fibrin as efficiently as plasmin, and exhibits potent ability to cleave plasminogen and prothrombin, as well as heavy chain of factor X (F10). In vitro, it cleaves insulin B-chain (at positions His38-Leu39, Ala40-Leu41 and Tyr16-Leu17). The sequence is that of Snake venom serine protease VaSP1 from Vipera ammodytes ammodytes (Western sand viper).